A 93-amino-acid chain; its full sequence is Large ribosomal subunit protein eL42 (93 aa).

Cys11, Cys14, Cys71, and Cys74 together coordinate Zn(2+). The C4-type zinc finger occupies 11 to 74 (CPYCKKHTSH…IALRLVCDEC (64 aa)).

This sequence belongs to the eukaryotic ribosomal protein eL42 family. As to quaternary structure, part of the 50S ribosomal subunit. The cofactor is Zn(2+).

In terms of biological role, binds to the 23S rRNA. The chain is Large ribosomal subunit protein eL42 from Thermoplasma acidophilum (strain ATCC 25905 / DSM 1728 / JCM 9062 / NBRC 15155 / AMRC-C165).